Reading from the N-terminus, the 308-residue chain is Glutaminase (308 aa).

Substrate-binding residues include serine 66, asparagine 117, glutamate 161, asparagine 168, tyrosine 192, tyrosine 244, and valine 262.

The protein belongs to the glutaminase family. In terms of assembly, homotetramer.

The enzyme catalyses L-glutamine + H2O = L-glutamate + NH4(+). The polypeptide is Glutaminase (Salmonella dublin (strain CT_02021853)).